Reading from the N-terminus, the 237-residue chain is Ribonuclease 3 (237 aa).

One can recognise an RNase III domain in the interval 8-134; it reads RSALLEKLGV…VIGAVYLDAG (127 aa). Residue E47 coordinates Mg(2+). D51 is an active-site residue. Positions 120 and 123 each coordinate Mg(2+). The active site involves E123. A DRBM domain is found at 161–229; sequence DPKTSLQEAA…ALSAWTALTN (69 aa).

Belongs to the ribonuclease III family. In terms of assembly, homodimer. It depends on Mg(2+) as a cofactor.

It is found in the cytoplasm. The catalysed reaction is Endonucleolytic cleavage to 5'-phosphomonoester.. Functionally, digests double-stranded RNA. Involved in the processing of primary rRNA transcript to yield the immediate precursors to the large and small rRNAs (23S and 16S). Processes some mRNAs, and tRNAs when they are encoded in the rRNA operon. Processes pre-crRNA and tracrRNA of type II CRISPR loci if present in the organism. This Leifsonia xyli subsp. xyli (strain CTCB07) protein is Ribonuclease 3.